A 172-amino-acid polypeptide reads, in one-letter code: uncharacterized protein (172 aa).

This is an uncharacterized protein from Treponema pallidum (strain Nichols).